Here is a 112-residue protein sequence, read N- to C-terminus: MGYRRLGLRSDHRRAMLRNMVTSLIKEERITTTETRAKEVRSIAEKMVTLAKRGDLAARRQVSEYLFDEEAAKKLFNTVAARYKDRPGGYTRIVKVGFRRGDAAPMVILELV.

It belongs to the bacterial ribosomal protein bL17 family. In terms of assembly, part of the 50S ribosomal subunit. Contacts protein L32.

The sequence is that of Large ribosomal subunit protein bL17 from Desulforudis audaxviator (strain MP104C).